The primary structure comprises 74 residues: ATP synthase subunit 9, mitochondrial (74 aa).

The next 2 helical transmembrane spans lie at 8 to 28 (MGAG…GNVF) and 50 to 70 (ILGF…AFLI).

It belongs to the ATPase C chain family. F-type ATPases have 2 components, CF(1) - the catalytic core - and CF(0) - the membrane proton channel. CF(1) has five subunits: alpha(3), beta(3), gamma(1), delta(1), epsilon(1). CF(0) has three main subunits: a, b and c.

The protein resides in the mitochondrion membrane. In terms of biological role, this protein is one of the chains of the nonenzymatic membrane component (F0) of mitochondrial ATPase. This is ATP synthase subunit 9, mitochondrial (ATP9) from Solanum lycopersicum (Tomato).